A 113-amino-acid chain; its full sequence is Protein C21/B27 (113 aa).

This is Protein C21/B27 from Homo sapiens (Human).